Consider the following 225-residue polypeptide: MNSPIDKLERKLGYQFKDAGLINLALTHRSANSKHNERLEFLGDSILSFVIADDLYHRFPKVNEGDMSRMRATLVRGHTLAELGREFDLGDYLKLGPGELKSGGFRRDSILADAVEAIIGAIYLDSDIEAVRGIVLSWYNSRLEAIKPGVSQKDPKTRLQEFLQGRRKPLPVYTVTNIKGEAHNQEFTVECDVAGVDKPVIGKGTSRRKAEQAAAETALEQLTNG.

One can recognise an RNase III domain in the interval 5-127 (IDKLERKLGY…IIGAIYLDSD (123 aa)). Mg(2+) is bound at residue glutamate 40. The active site involves aspartate 44. Positions 113 and 116 each coordinate Mg(2+). Glutamate 116 is a catalytic residue. The region spanning 154-224 (DPKTRLQEFL…AETALEQLTN (71 aa)) is the DRBM domain.

The protein belongs to the ribonuclease III family. In terms of assembly, homodimer. Mg(2+) is required as a cofactor.

It is found in the cytoplasm. It catalyses the reaction Endonucleolytic cleavage to 5'-phosphomonoester.. Digests double-stranded RNA. Involved in the processing of primary rRNA transcript to yield the immediate precursors to the large and small rRNAs (23S and 16S). Processes some mRNAs, and tRNAs when they are encoded in the rRNA operon. Processes pre-crRNA and tracrRNA of type II CRISPR loci if present in the organism. This is Ribonuclease 3 from Vibrio campbellii (strain ATCC BAA-1116).